Reading from the N-terminus, the 435-residue chain is Protein GOLM2 (435 aa).

An N-acetylmethionine modification is found at methionine 1. The Cytoplasmic portion of the chain corresponds to 1 to 14; that stretch reads MVGFGANRRAGRLP. The helical; Signal-anchor for type II membrane protein transmembrane segment at 15–35 threads the bilayer; sequence SFVLVVLLVVIVVLAFNYWSI. Residues 35 to 194 adopt a coiled-coil conformation; it reads ISSRHVLLQE…DQFLQEQKET (160 aa). At 36–435 the chain is on the lumenal side; it reads SSRHVLLQEE…YGKQRFSDVL (400 aa). 2 stretches are compositionally biased toward basic and acidic residues: residues 191–212 and 223–239; these read QKET…DHGA and DANK…PHGK. Disordered regions lie at residues 191 to 239 and 271 to 435; these read QKET…PHGK and PPVL…SDVL. Residue serine 232 is modified to Phosphoserine. Polar residues-rich tracts occupy residues 282–294 and 302–320; these read QTIS…QPLS and HLNQ…SNPL. The span at 343-361 shows a compositional bias: basic and acidic residues; it reads ATRDRANDFHKLKQSRFFD. Serine 365 bears the Phosphoserine mark. Over residues 398-417 the composition is skewed to acidic residues; the sequence is YNEEEDGDGGEEDVQDDEER. Basic and acidic residues predominate over residues 425 to 435; it reads DYGKQRFSDVL.

The protein belongs to the GOLM family.

It localises to the membrane. This Mus musculus (Mouse) protein is Protein GOLM2.